Reading from the N-terminus, the 231-residue chain is Androgen-dependent TFPI-regulating protein (231 aa).

Over 1–7 the chain is Cytoplasmic; it reads MTRTTTC. A helical membrane pass occupies residues 8–28; it reads VYHFLVWNWYIFLNYYIPLIG. The Extracellular segment spans residues 29-45; that stretch reads KDDEKLKEFHDGGRSKY. The helical transmembrane segment at 46-66 threads the bilayer; the sequence is LTLLNLLLQAIFFGVACLDDV. Residues 67-85 lie on the Cytoplasmic side of the membrane; sequence LKRIIGRKDIKFITSTRDL. A helical transmembrane segment spans residues 86-106; the sequence is LFSTLVFPISTFIFLVFWTLF. The Extracellular segment spans residues 107–123; it reads YYDRSLIYPKGLDDYFP. A helical transmembrane segment spans residues 124–144; the sequence is AWLNHAMHTYILLFVLVETIL. Residues 145–154 lie on the Cytoplasmic side of the membrane; it reads RPHHYPSKKL. The helical transmembrane segment at 155–172 threads the bilayer; the sequence is GLALLGACNLAYITRVLW. At 173–190 the chain is on the extracellular side; it reads RYSQTGNWVYPVFASLNP. A helical transmembrane segment spans residues 191–211; sequence LGIIIFFLVCYILNASIYLVG. The Cytoplasmic segment spans residues 212 to 231; it reads EKINHWKWGATVKPLMKKKK.

It belongs to the AIG1 family. In terms of tissue distribution, highly expressed in flank organs and weakly in testis and earlobes.

The protein resides in the cell membrane. The catalysed reaction is 9-hexadecanoyloxy-octadecanoate + H2O = 9-hydroxy-octadecanoate + hexadecanoate + H(+). The enzyme catalyses 12-hexadecanoyloxy-octadecanoate + H2O = 12-hydroxyoctadecanoate + hexadecanoate + H(+). It catalyses the reaction 9-(9Z-hexadecenoyloxy)-octadecanoate + H2O = (9Z)-hexadecenoate + 9-hydroxy-octadecanoate + H(+). It carries out the reaction 12-(9Z-hexadecenoyloxy)-octadecanoate + H2O = 12-hydroxyoctadecanoate + (9Z)-hexadecenoate + H(+). The catalysed reaction is 13-(9Z-hexadecenoyloxy)-octadecanoate + H2O = 13-hydroxy-octadecanoate + (9Z)-hexadecenoate + H(+). The enzyme catalyses 9-octadecanoyloxy-octadecanoate + H2O = 9-hydroxy-octadecanoate + octadecanoate + H(+). It catalyses the reaction 12-octadecanoyloxy-octadecanoate + H2O = 12-hydroxyoctadecanoate + octadecanoate + H(+). It carries out the reaction 13-octadecanoyloxy-octadecanoate + H2O = 13-hydroxy-octadecanoate + octadecanoate + H(+). The catalysed reaction is 9-(9Z-octadecenoyloxy)-octadecanoate + H2O = 9-hydroxy-octadecanoate + (9Z)-octadecenoate + H(+). The enzyme catalyses 12-(9Z-octadecenoyloxy)-octadecanoate + H2O = 12-hydroxyoctadecanoate + (9Z)-octadecenoate + H(+). It catalyses the reaction 13-(9Z-octadecenoyloxy)-octadecanoate + H2O = 13-hydroxy-octadecanoate + (9Z)-octadecenoate + H(+). It carries out the reaction 5-(9Z-octadecenoyloxy)-octadecanoate + H2O = 5-hydroxy-octadecanoate + (9Z)-octadecenoate + H(+). Functionally, hydrolyzes bioactive fatty-acid esters of hydroxy-fatty acids (FAHFAs), but not other major classes of lipids. Shows a preference for FAHFAs with branching distal from the carboxylate head group of the lipids. Regulates the expression and the cell-associated anticoagulant activity of the inhibitor TFPI in endothelial cells (in vitro). The chain is Androgen-dependent TFPI-regulating protein (ADTRP) from Mesocricetus auratus (Golden hamster).